Reading from the N-terminus, the 453-residue chain is Protein ECM18 (453 aa).

Positions 130–435 constitute an AB hydrolase-1 domain; it reads LLIHGYAASS…SGHNLFLDNP (306 aa). The HXXXXD motif motif lies at 428-433; it reads HNLFLD.

It belongs to the peptidase S33 family. ABHD4/ABHD5 subfamily.

It is found in the mitochondrion. Functionally, may be involved in cell wall organization and biogenesis. The protein is Protein ECM18 (ECM18) of Saccharomyces cerevisiae (strain ATCC 204508 / S288c) (Baker's yeast).